We begin with the raw amino-acid sequence, 203 residues long: Probable deoxycytidylate deaminase (203 aa).

The region spanning 27-163 (HWDDYFMATS…PTYRASKRML (137 aa)) is the CMP/dCMP-type deaminase domain. His-102 is a binding site for Zn(2+). Glu-104 acts as the Proton donor in catalysis. 2 residues coordinate Zn(2+): Cys-128 and Cys-131.

Belongs to the cytidine and deoxycytidylate deaminase family. The cofactor is Zn(2+).

It catalyses the reaction dCMP + H2O + H(+) = dUMP + NH4(+). Its function is as follows. Supplies the nucleotide substrate for thymidylate synthetase. This chain is Probable deoxycytidylate deaminase, found in Drosophila melanogaster (Fruit fly).